The chain runs to 207 residues: Alpha-1-acid glycoprotein 8 (207 aa).

Residues 1-18 form the signal peptide; it reads MALHTVLIMLSLLPMLEA. Asn-25, Asn-34, Asn-76, Asn-94, and Asn-104 each carry an N-linked (GlcNAc...) asparagine glycan. A disulfide bridge links Cys-91 with Cys-184.

This sequence belongs to the calycin superfamily. Lipocalin family. In terms of tissue distribution, expressed by the liver and secreted in plasma.

The protein resides in the secreted. Functions as a transport protein in the blood stream. Binds various ligands in the interior of its beta-barrel domain. Appears to function in modulating the activity of the immune system during the acute-phase reaction. In Mus caroli (Ryukyu mouse), this protein is Alpha-1-acid glycoprotein 8 (Orm8).